Consider the following 623-residue polypeptide: AM-toxin biosynthesis protein 12-2 (623 aa).

A disordered region spans residues 110–129 (TIPGTSQAKNTEPDHQASGL).

The protein operates within mycotoxin biosynthesis. In terms of biological role, part of the gene clusters that mediate the biosynthesis of AM-toxins, host-selective toxins (HSTs) causing Alternaria blotch on apple, a worldwide distributed disease. AM-toxins are cyclic depsipeptides containing the 3 residues 2-hydroxy-isovaleric acid (2-HIV), dehydroalanine, L-alanine which are common for all 3 AM-toxins I to III. The fourth precursor is L-alpha-amino-methoxyphenyl-valeric acid (L-Amv) for AM-toxin I, L-alpha-amino-phenyl-valeric acid (L-Apv) for AM-toxin II, and L-alpha-amino-hydroxyphenyl-valeric acid (L-Ahv) for AM-toxin III. AM-toxins have two target sites for affecting susceptible apple cells; they cause invagination of the plasma membrane and electrolyte loss and chloroplast disorganization. The non-ribosomal peptide synthetase AMT1 contains 4 catalytic modules and is responsible for activation of each residue in AM-toxin. The aldo-keto reductase AMT2 catalyzes the conversion of 2-keto-isovaleric acid (2-KIV) to 2-hydroxy-isovaleric acid (2-HIV), one of the precursor residues incorporated by AMT1 during AM-toxin biosynthesis, by reduction of its ketone to an alcohol. The cytochrome P450 monooxygenase AMT3 and the thioesterase AMT4 are also important for AM-toxin production, but their exact function within the AM-toxin biosynthesis are not known yet. Up to 21 proteins (including AMT1 to AMT4) are predicted to be involved in AM-toxin biosynthesis since their expression ishighly up-regulated in AM-toxin-producing cultures. In Alternaria alternata (Alternaria rot fungus), this protein is AM-toxin biosynthesis protein 12-2.